The chain runs to 517 residues: Crotonobetaine/carnitine--CoA ligase (517 aa).

This sequence belongs to the ATP-dependent AMP-binding enzyme family.

The enzyme catalyses 4-(trimethylamino)butanoate + ATP + CoA = 4-(trimethylamino)butanoyl-CoA + AMP + diphosphate. The catalysed reaction is crotonobetaine + ATP + CoA = crotonobetainyl-CoA + AMP + diphosphate. It catalyses the reaction (R)-carnitine + ATP + CoA = (R)-carnitinyl-CoA + AMP + diphosphate. Its pathway is amine and polyamine metabolism; carnitine metabolism. Catalyzes the transfer of CoA to carnitine, generating the initial carnitinyl-CoA needed for the CaiB reaction cycle. Also has activity toward crotonobetaine and gamma-butyrobetaine. This is Crotonobetaine/carnitine--CoA ligase from Salmonella agona (strain SL483).